The sequence spans 2169 residues: Protein sidekick-1 (2169 aa).

Positions 1-50 (MVGRKVDREIIARRNSRRDGMMMKLNFCFFFCRRWWAFLLLQLHMLQALA) are cleaved as a signal peptide. At 51–1961 (QDDVAPYFKT…TEAPFYEEWW (1911 aa)) the chain is on the extracellular side. Ig-like C2-type domains follow at residues 56-138 (PYFK…SEVQ), 143-229 (GNFM…SPLI), 245-333 (PIIV…AFIS), 338-428 (PYFT…LDVT), and 432-521 (PAFI…VMLT). A disulfide bond links Cys-78 and Cys-121. N-linked (GlcNAc...) asparagine glycans are attached at residues Asn-93, Asn-223, and Asn-253. Cystine bridges form between Cys-267–Cys-314, Cys-360–Cys-410, and Cys-453–Cys-505. Asn-502, Asn-524, and Asn-534 each carry an N-linked (GlcNAc...) asparagine glycan. An Ig-like C2-type 6 domain is found at 525-615 (RTFIVHPPEN…GNDSRMARLE (91 aa)). Residues Cys-547 and Cys-599 are joined by a disulfide bond. N-linked (GlcNAc...) asparagine glycans are attached at residues Asn-607, Asn-631, Asn-734, Asn-773, Asn-834, Asn-967, and Asn-977. Fibronectin type-III domains are found at residues 622–718 (SPQN…LPEE), 723–819 (PPKN…TLQG), 824–922 (PPQN…TLED), 926–1020 (AVGH…VPPE), 1024–1123 (APSN…TLQA), 1128–1226 (APGS…TRES), 1231–1328 (PPEN…TKDD), 1332–1426 (PPIR…TEKR), 1431–1528 (PPQQ…TLQD), 1533–1651 (PPSS…VGEA), 1656–1752 (APQN…THQA), 1756–1851 (APSF…AGPA), and 1854–1955 (SPGS…TEAP). N-linked (GlcNAc...) asparagine glycans are attached at residues Asn-1234 and Asn-1285. The tract at residues 1423–1443 (TEKRERPAPPQQLTTPQSDVS) is disordered. A compositionally biased stretch (polar residues) spans 1433–1443 (QQLTTPQSDVS). 5 N-linked (GlcNAc...) asparagine glycosylation sites follow: Asn-1606, Asn-1700, Asn-1719, Asn-1771, and Asn-1845. The helical transmembrane segment at 1962 to 1982 (FLLVMALSSLILILLVVFALV) threads the bilayer. Residues 1983-2169 (LHGQSKKYKN…TPVTGFSSFV (187 aa)) lie on the Cytoplasmic side of the membrane. 2 disordered regions span residues 2028–2050 (TFSK…HYSD) and 2145–2169 (GGVY…SSFV). Residues 2160–2169 (TPVTGFSSFV) are compositionally biased toward polar residues. The PDZ-binding signature appears at 2163–2169 (TGFSSFV).

Belongs to the sidekick family. In terms of assembly, homodimer; mediates homophilic interactions to promote cell adhesion. Expressed by non-overlapping subsets of retinal neurons. SDK1, SDK2, DSCAM and DSCAML1 are expressed in non-overlapping subsets of interneurons and retinal ganglion cells (RGCs) that form synapses in distinct inner plexiform layer (IPL) sublaminae.

Its subcellular location is the cell membrane. It is found in the synapse. Functionally, adhesion molecule that promotes lamina-specific synaptic connections in the retina. Expressed in specific subsets of interneurons and retinal ganglion cells (RGCs) and promotes synaptic connectivity via homophilic interactions. The polypeptide is Protein sidekick-1 (Gallus gallus (Chicken)).